Here is a 456-residue protein sequence, read N- to C-terminus: Bis(5'-adenosyl)-triphosphatase enpp4 (456 aa).

A signal peptide spans 1–18; it reads MFNMKILVIPLFWGLVTG. The Extracellular segment spans residues 19–410; the sequence is YKGNSSDSSA…DQWCINLPEA (392 aa). Residues aspartate 37 and threonine 73 each coordinate Zn(2+). The active-site AMP-threonine intermediate is threonine 73. Asparagine 94 lines the substrate pocket. Asparagine 148 carries an N-linked (GlcNAc...) asparagine glycan. Tyrosine 157 lines the substrate pocket. Residue asparagine 169 is glycosylated (N-linked (GlcNAc...) asparagine). Zn(2+)-binding residues include aspartate 192, histidine 196, aspartate 240, and histidine 241. Aspartate 192 is a substrate binding site. Cysteine 257 and cysteine 290 are disulfide-bonded. Residues asparagine 279 and asparagine 330 are each glycosylated (N-linked (GlcNAc...) asparagine). Histidine 339 is a Zn(2+) binding site. A glycan (N-linked (GlcNAc...) asparagine) is linked at asparagine 389. The cysteines at positions 397 and 404 are disulfide-linked. A helical membrane pass occupies residues 411-431; sequence IGIVVSALLVLTMLTGLMIFM. Topologically, residues 432–456 are cytoplasmic; sequence RSRASTSRPFSRLQLQEDDDDPLID.

The protein belongs to the nucleotide pyrophosphatase/phosphodiesterase family. It depends on Zn(2+) as a cofactor.

Its subcellular location is the cell membrane. The catalysed reaction is P(1),P(3)-bis(5'-adenosyl) triphosphate + H2O = AMP + ADP + 2 H(+). Functionally, hydrolyzes extracellular Ap3A into AMP and ADP, and Ap4A into AMP and ATP. Ap3A and Ap4A are diadenosine polyphosphates thought to induce proliferation of vascular smooth muscle cells. Acts as a procoagulant, mediating platelet aggregation at the site of nascent thrombus via release of ADP from Ap3A and activation of ADP receptors. This is Bis(5'-adenosyl)-triphosphatase enpp4 (Enpp4) from Mus musculus (Mouse).